Reading from the N-terminus, the 181-residue chain is Acireductone dioxygenase (181 aa).

Positions 97, 99, 103, and 141 each coordinate Fe(2+). The Ni(2+) site is built by H97, H99, E103, and H141.

It belongs to the acireductone dioxygenase (ARD) family. As to quaternary structure, monomer. Fe(2+) is required as a cofactor. Requires Ni(2+) as cofactor.

The catalysed reaction is 1,2-dihydroxy-5-(methylsulfanyl)pent-1-en-3-one + O2 = 3-(methylsulfanyl)propanoate + CO + formate + 2 H(+). It carries out the reaction 1,2-dihydroxy-5-(methylsulfanyl)pent-1-en-3-one + O2 = 4-methylsulfanyl-2-oxobutanoate + formate + 2 H(+). It functions in the pathway amino-acid biosynthesis; L-methionine biosynthesis via salvage pathway; L-methionine from S-methyl-5-thio-alpha-D-ribose 1-phosphate: step 5/6. In terms of biological role, catalyzes 2 different reactions between oxygen and the acireductone 1,2-dihydroxy-3-keto-5-methylthiopentene (DHK-MTPene) depending upon the metal bound in the active site. Fe-containing acireductone dioxygenase (Fe-ARD) produces formate and 2-keto-4-methylthiobutyrate (KMTB), the alpha-ketoacid precursor of methionine in the methionine recycle pathway. Ni-containing acireductone dioxygenase (Ni-ARD) produces methylthiopropionate, carbon monoxide and formate, and does not lie on the methionine recycle pathway. The protein is Acireductone dioxygenase of Pseudomonas fluorescens (strain Pf0-1).